Here is a 1488-residue protein sequence, read N- to C-terminus: Chromosome partition protein MukB (1488 aa).

34–41 contributes to the ATP binding site; that stretch reads GGNGAGKS. 3 coiled-coil regions span residues 326–413, 444–472, and 509–602; these read LEAD…QTRA, LDTF…QTAH, and RHLA…RRAP. Positions 666–783 are flexible hinge; that stretch reads PGGAEDQRLN…SLPIFGRAAR (118 aa). Coiled-coil stretches lie at residues 835 to 923, 977 to 1116, and 1209 to 1265; these read EAEI…AKLE, EMLS…AKAG, and VEAI…LQSV.

Belongs to the SMC family. MukB subfamily. Homodimerization via its hinge domain. Binds to DNA via its C-terminal region. Interacts, and probably forms a ternary complex, with MukE and MukF via its C-terminal region. The complex formation is stimulated by calcium or magnesium. Interacts with tubulin-related protein FtsZ.

Its subcellular location is the cytoplasm. It is found in the nucleoid. Its function is as follows. Plays a central role in chromosome condensation, segregation and cell cycle progression. Functions as a homodimer, which is essential for chromosome partition. Involved in negative DNA supercoiling in vivo, and by this means organize and compact chromosomes. May achieve or facilitate chromosome segregation by condensation DNA from both sides of a centrally located replisome during cell division. The polypeptide is Chromosome partition protein MukB (Salmonella paratyphi C (strain RKS4594)).